The following is a 65-amino-acid chain: Large ribosomal subunit protein bL35 (65 aa).

Residues 1 to 52 (MPKMKSNRAAAKRFKRTANGGFKSGNSFTSHRFHGKTKKQRRQLRGLSMMDK) are disordered. The span at 31–44 (HRFHGKTKKQRRQL) shows a compositional bias: basic residues.

This sequence belongs to the bacterial ribosomal protein bL35 family.

The polypeptide is Large ribosomal subunit protein bL35 (Limosilactobacillus reuteri (strain DSM 20016) (Lactobacillus reuteri)).